We begin with the raw amino-acid sequence, 496 residues long: Probable E3 ubiquitin-protein ligase ARI12 (496 aa).

Residues 110 to 319 (NEYFCGACGE…GDLHFCTFDA (210 aa)) are TRIAD supradomain. Positions 114, 117, 131, 133, 136, 139, 162, 172, 240, 243, 248, 253, 267, 270, 286, and 289 each coordinate Zn(2+). An RING-type 1 zinc finger spans residues 114 to 172 (CGACGESHPHKNLASVSCGHRICTRCWTSHINKIISEKPAAEWNLWLKCPVRVGLHASC). An IBR-type zinc finger spans residues 191-253 (FNYNQYLLRS…REDAHSPVDC (63 aa)). Residues 267-297 (CPKCKLRIPRNQDNSLKMKCLPCNYVFCWFC) form an RING-type 2; atypical zinc finger.

It belongs to the RBR family. Ariadne subfamily. It depends on Zn(2+) as a cofactor. Preferentially expressed in roots.

The enzyme catalyses [E2 ubiquitin-conjugating enzyme]-S-ubiquitinyl-L-cysteine + [acceptor protein]-L-lysine = [E2 ubiquitin-conjugating enzyme]-L-cysteine + [acceptor protein]-N(6)-ubiquitinyl-L-lysine.. The protein operates within protein modification; protein ubiquitination. Functionally, might act as an E3 ubiquitin-protein ligase, or as part of E3 complex, which accepts ubiquitin from specific E2 ubiquitin-conjugating enzymes and then transfers it to substrates. The polypeptide is Probable E3 ubiquitin-protein ligase ARI12 (ARI12) (Arabidopsis thaliana (Mouse-ear cress)).